A 453-amino-acid chain; its full sequence is Bifunctional protein GlmU (453 aa).

The segment at 1-227 (MTQLSVVILA…LMEVEGANNR (227 aa)) is pyrophosphorylase. Residues 9 to 12 (LAAG), Lys23, Gln74, 79 to 80 (GT), 101 to 103 (YGD), Gly138, Glu152, Asn167, and Asn225 each bind UDP-N-acetyl-alpha-D-glucosamine. Asp103 is a binding site for Mg(2+). Asn225 serves as a coordination point for Mg(2+). The segment at 228-248 (LQLAALERYYQKIQAEKLLLA) is linker. The segment at 249–453 (GVTIIDPARF…IQGWQRPTKK (205 aa)) is N-acetyltransferase. Residues Arg331 and Lys349 each contribute to the UDP-N-acetyl-alpha-D-glucosamine site. The Proton acceptor role is filled by His361. Positions 364 and 375 each coordinate UDP-N-acetyl-alpha-D-glucosamine. Residues Ala378, 384–385 (NY), Ser403, Ala421, and Arg438 each bind acetyl-CoA.

This sequence in the N-terminal section; belongs to the N-acetylglucosamine-1-phosphate uridyltransferase family. It in the C-terminal section; belongs to the transferase hexapeptide repeat family. Homotrimer. Requires Mg(2+) as cofactor.

The protein localises to the cytoplasm. It catalyses the reaction alpha-D-glucosamine 1-phosphate + acetyl-CoA = N-acetyl-alpha-D-glucosamine 1-phosphate + CoA + H(+). It carries out the reaction N-acetyl-alpha-D-glucosamine 1-phosphate + UTP + H(+) = UDP-N-acetyl-alpha-D-glucosamine + diphosphate. Its pathway is nucleotide-sugar biosynthesis; UDP-N-acetyl-alpha-D-glucosamine biosynthesis; N-acetyl-alpha-D-glucosamine 1-phosphate from alpha-D-glucosamine 6-phosphate (route II): step 2/2. The protein operates within nucleotide-sugar biosynthesis; UDP-N-acetyl-alpha-D-glucosamine biosynthesis; UDP-N-acetyl-alpha-D-glucosamine from N-acetyl-alpha-D-glucosamine 1-phosphate: step 1/1. It participates in bacterial outer membrane biogenesis; LPS lipid A biosynthesis. Its function is as follows. Catalyzes the last two sequential reactions in the de novo biosynthetic pathway for UDP-N-acetylglucosamine (UDP-GlcNAc). The C-terminal domain catalyzes the transfer of acetyl group from acetyl coenzyme A to glucosamine-1-phosphate (GlcN-1-P) to produce N-acetylglucosamine-1-phosphate (GlcNAc-1-P), which is converted into UDP-GlcNAc by the transfer of uridine 5-monophosphate (from uridine 5-triphosphate), a reaction catalyzed by the N-terminal domain. The protein is Bifunctional protein GlmU of Glaesserella parasuis serovar 5 (strain SH0165) (Haemophilus parasuis).